We begin with the raw amino-acid sequence, 294 residues long: Large ribosomal subunit protein uL4m (294 aa).

The disordered stretch occupies residues 120–139; that stretch reads VRGGGRKPWQQKGSGRARHG. Arg147 bears the Omega-N-methylarginine mark.

This sequence belongs to the universal ribosomal protein uL4 family. As to quaternary structure, component of the mitochondrial ribosome large subunit (39S) which comprises a 16S rRNA and about 50 distinct proteins. Interacts with MIEF1 upstream open reading frame protein.

The protein resides in the mitochondrion. The sequence is that of Large ribosomal subunit protein uL4m (MRPL4) from Bos taurus (Bovine).